A 200-amino-acid chain; its full sequence is Small ribosomal subunit protein uS4 (200 aa).

A disordered region spans residues 1-43; the sequence is MARYTGPRGRRDRRAGVMLSSMRKNPLEKKPYPPGEHGRDRQR. The span at 25 to 43 shows a compositional bias: basic and acidic residues; it reads NPLEKKPYPPGEHGRDRQR. The 67-residue stretch at 92–158 folds into the S4 RNA-binding domain; the sequence is LRMDNVVYRM…QPIQEAVEQV (67 aa).

This sequence belongs to the universal ribosomal protein uS4 family. As to quaternary structure, part of the 30S ribosomal subunit. Contacts protein S5. The interaction surface between S4 and S5 is involved in control of translational fidelity.

Functionally, one of the primary rRNA binding proteins, it binds directly to 16S rRNA where it nucleates assembly of the body of the 30S subunit. With S5 and S12 plays an important role in translational accuracy. In Rubrobacter xylanophilus (strain DSM 9941 / JCM 11954 / NBRC 16129 / PRD-1), this protein is Small ribosomal subunit protein uS4.